The sequence spans 346 residues: Putative isoaspartyl peptidase/L-asparaginase (346 aa).

T207 functions as the Nucleophile in the catalytic mechanism. Substrate is bound by residues 235–238 (RVGD) and 257–260 (TGTG).

Belongs to the Ntn-hydrolases family. Heterodimer of an alpha and beta chain produced by autocleavage. Cleaved into an alpha and beta chain by autocatalysis; this activates the enzyme. The N-terminal residue of the beta subunit is responsible for the nucleophile hydrolase activity.

The enzyme catalyses Cleavage of a beta-linked Asp residue from the N-terminus of a polypeptide.. The catalysed reaction is L-asparagine + H2O = L-aspartate + NH4(+). In terms of biological role, has both L-asparaginase and beta-aspartyl peptidase activity. Does not have aspartylglucosaminidase activity and is inactive toward GlcNAc-L-Asn. Likewise, has no activity toward glutamine. This Dictyostelium discoideum (Social amoeba) protein is Putative isoaspartyl peptidase/L-asparaginase.